Consider the following 333-residue polypeptide: MLLVALALLAFLFPAGDTQNALQWPTSVHGIQISSFFNHTMAQSRCSGWLGNMELGSFDSDTGTIIFKKPWSKANFSNEEVLELEELFQVYMLGFIREVQERMSDFQMEYPFEIQGIAGCELISGGTIDFFLRGALEGLDFLSIKNSTCWPAPEGGTKAKKFCTLILQYKGIWDIMENLLTKTCPRYVLSVLESGKPDIQKQVKPDAWLSQGPSPGPGLLQLVCHVSGFYPKPVWVMWMRGEQEQPETQKGDVLPNADETWYLQVTLDVAAEEAAGLSCRVKHSSLEGQDIILYWGHSISIGWIILAVLVPCLIVLVLFVLWFYRRWSYEDIL.

Residues Met1 to Asp17 form the signal peptide. At Thr18 to Gly302 the chain is on the extracellular side. Asn38, Asn75, and Asn146 each carry an N-linked (GlcNAc...) asparagine glycan. 3 disulfide bridges follow: Cys120-Cys184, Cys149-Cys163, and Cys224-Cys279. The region spanning Pro197–Trp295 is the Ig-like domain. The chain crosses the membrane as a helical span at residues Trp303–Phe323. The Cytoplasmic segment spans residues Tyr324–Leu333. Positions Tyr329–Ile332 match the Internalization signal motif.

In terms of assembly, heterodimer with B2M (beta-2-microglobulin). Interacts with saposin C.

It is found in the cell membrane. Its subcellular location is the endosome membrane. It localises to the lysosome membrane. Its function is as follows. Antigen-presenting protein that binds self and non-self lipid and glycolipid antigens and presents them to T-cell receptors on natural killer T-cells. In Cavia porcellus (Guinea pig), this protein is T-cell surface glycoprotein CD1b1 (CD1B1).